The sequence spans 398 residues: cAMP-dependent protein kinase type 3 (398 aa).

2 positions are modified to phosphoserine: Ser-15 and Ser-55. The Protein kinase domain maps to 88–342; the sequence is FQILRTLGTG…SEDVKNHPWF (255 aa). ATP-binding positions include 94–102 and Lys-117; that span reads LGTGSFGRV. Asp-211 acts as the Proton acceptor in catalysis. In terms of domain architecture, AGC-kinase C-terminal spans 343–398; that stretch reads NEVIWEKLLARYIETPYEPPIQQGQGDTSQFDRYPEEEFNYGIQGEDPYMDLMKEF.

The protein belongs to the protein kinase superfamily. AGC Ser/Thr protein kinase family. cAMP subfamily.

The enzyme catalyses L-seryl-[protein] + ATP = O-phospho-L-seryl-[protein] + ADP + H(+). It carries out the reaction L-threonyl-[protein] + ATP = O-phospho-L-threonyl-[protein] + ADP + H(+). Its activity is regulated as follows. Activated by cAMP. This is cAMP-dependent protein kinase type 3 (TPK3) from Saccharomyces cerevisiae (strain ATCC 204508 / S288c) (Baker's yeast).